A 203-amino-acid chain; its full sequence is Glycerol-3-phosphate acyltransferase (203 aa).

The next 4 helical transmembrane spans lie at 4–24, 68–88, 117–137, and 155–175; these read LALI…AVLI, IPVW…VIAI, PIGL…AVLF, and TWMF…LIVF.

It belongs to the PlsY family. In terms of assembly, probably interacts with PlsX.

It localises to the cell inner membrane. The enzyme catalyses an acyl phosphate + sn-glycerol 3-phosphate = a 1-acyl-sn-glycero-3-phosphate + phosphate. Its pathway is lipid metabolism; phospholipid metabolism. In terms of biological role, catalyzes the transfer of an acyl group from acyl-phosphate (acyl-PO(4)) to glycerol-3-phosphate (G3P) to form lysophosphatidic acid (LPA). This enzyme utilizes acyl-phosphate as fatty acyl donor, but not acyl-CoA or acyl-ACP. The sequence is that of Glycerol-3-phosphate acyltransferase from Vibrio campbellii (strain ATCC BAA-1116).